The sequence spans 93 residues: uncharacterized protein (93 aa).

Residues 35-72 (KSVPPPTPPKPVKKTPSPTLPKPSKQKQEPQVEVNEDR) are disordered. The segment covering 60-72 (QKQEPQVEVNEDR) has biased composition (basic and acidic residues).

This is an uncharacterized protein from Ostreid herpesvirus 1 (isolate France) (OsHV-1).